A 737-amino-acid chain; its full sequence is Exostosin-1c (737 aa).

Residues methionine 1–lysine 6 are Cytoplasmic-facing. A helical; Signal-anchor for type II membrane protein transmembrane segment spans residues tyrosine 7 to glutamine 27. Residues glutamate 28 to valine 737 lie on the Lumenal side of the membrane. Residues asparagine 194 and asparagine 322 are each glycosylated (N-linked (GlcNAc...) asparagine). UDP-N-acetyl-alpha-D-glucosamine is bound by residues arginine 432, arginine 540, aspartate 556, glutamate 557, aspartate 558, glutamate 644, aspartate 645, and arginine 692. Aspartate 558 provides a ligand contact to Mn(2+). Cysteine 643 and cysteine 695 form a disulfide bridge. Aspartate 645 is a catalytic residue.

It belongs to the glycosyltransferase 47 family. The cofactor is Mn(2+).

The protein resides in the endoplasmic reticulum membrane. It catalyses the reaction 3-O-{[(1-&gt;4)-beta-D-GlcA-(1-&gt;4)-alpha-D-GlcNAc](n)-(1-&gt;4)-beta-D-GlcA-(1-&gt;3)-beta-D-Gal-(1-&gt;3)-beta-D-Gal-(1-&gt;4)-beta-D-Xyl}-L-seryl-[protein] + UDP-N-acetyl-alpha-D-glucosamine = 3-O-{alpha-D-GlcNAc-[(1-&gt;4)-beta-D-GlcA-(1-&gt;4)-alpha-D-GlcNAc](n)-(1-&gt;4)-beta-D-GlcA-(1-&gt;3)-beta-D-Gal-(1-&gt;3)-beta-D-Gal-(1-&gt;4)-beta-D-Xyl}-L-seryl-[protein] + UDP + H(+). The enzyme catalyses 3-O-{alpha-D-GlcNAc-[(1-&gt;4)-beta-D-GlcA-(1-&gt;4)-alpha-D-GlcNAc](n)-(1-&gt;4)-beta-D-GlcA-(1-&gt;3)-beta-D-Gal-(1-&gt;3)-beta-D-Gal-(1-&gt;4)-beta-D-Xyl}-L-seryl-[protein] + UDP-alpha-D-glucuronate = 3-O-{[(1-&gt;4)-beta-D-GlcA-(1-&gt;4)-alpha-D-GlcNAc](n+1)-(1-&gt;4)-beta-D-GlcA-(1-&gt;3)-beta-D-Gal-(1-&gt;3)-beta-D-Gal-(1-&gt;4)-beta-D-Xyl}-L-seryl-[protein] + UDP + H(+). The protein operates within protein modification; protein glycosylation. Glycosyltransferase required for the biosynthesis of heparan-sulfate. The sequence is that of Exostosin-1c (ext1c) from Danio rerio (Zebrafish).